Consider the following 145-residue polypeptide: D-aminoacyl-tRNA deacylase (145 aa).

Positions 137 to 138 (GP) match the Gly-cisPro motif, important for rejection of L-amino acids motif.

This sequence belongs to the DTD family. Homodimer.

It localises to the cytoplasm. It carries out the reaction glycyl-tRNA(Ala) + H2O = tRNA(Ala) + glycine + H(+). It catalyses the reaction a D-aminoacyl-tRNA + H2O = a tRNA + a D-alpha-amino acid + H(+). An aminoacyl-tRNA editing enzyme that deacylates mischarged D-aminoacyl-tRNAs. Also deacylates mischarged glycyl-tRNA(Ala), protecting cells against glycine mischarging by AlaRS. Acts via tRNA-based rather than protein-based catalysis; rejects L-amino acids rather than detecting D-amino acids in the active site. By recycling D-aminoacyl-tRNA to D-amino acids and free tRNA molecules, this enzyme counteracts the toxicity associated with the formation of D-aminoacyl-tRNA entities in vivo and helps enforce protein L-homochirality. The chain is D-aminoacyl-tRNA deacylase from Idiomarina loihiensis (strain ATCC BAA-735 / DSM 15497 / L2-TR).